The following is a 93-amino-acid chain: Co-chaperonin GroES (93 aa).

The protein belongs to the GroES chaperonin family. As to quaternary structure, heptamer of 7 subunits arranged in a ring. Interacts with the chaperonin GroEL.

It localises to the cytoplasm. Functionally, together with the chaperonin GroEL, plays an essential role in assisting protein folding. The GroEL-GroES system forms a nano-cage that allows encapsulation of the non-native substrate proteins and provides a physical environment optimized to promote and accelerate protein folding. GroES binds to the apical surface of the GroEL ring, thereby capping the opening of the GroEL channel. The sequence is that of Co-chaperonin GroES from Streptococcus constellatus.